A 264-amino-acid polypeptide reads, in one-letter code: Thymidylate synthase (264 aa).

DUMP is bound by residues Arg21 and 126-127; that span reads RR. The active-site Nucleophile is Cys146. DUMP contacts are provided by residues 166 to 169, Asn177, and 207 to 209; these read RSAD and HLY. Asp169 serves as a coordination point for (6R)-5,10-methylene-5,6,7,8-tetrahydrofolate. Ala263 is a (6R)-5,10-methylene-5,6,7,8-tetrahydrofolate binding site.

It belongs to the thymidylate synthase family. Bacterial-type ThyA subfamily. As to quaternary structure, homodimer.

The protein resides in the cytoplasm. It catalyses the reaction dUMP + (6R)-5,10-methylene-5,6,7,8-tetrahydrofolate = 7,8-dihydrofolate + dTMP. Its pathway is pyrimidine metabolism; dTTP biosynthesis. In terms of biological role, catalyzes the reductive methylation of 2'-deoxyuridine-5'-monophosphate (dUMP) to 2'-deoxythymidine-5'-monophosphate (dTMP) while utilizing 5,10-methylenetetrahydrofolate (mTHF) as the methyl donor and reductant in the reaction, yielding dihydrofolate (DHF) as a by-product. This enzymatic reaction provides an intracellular de novo source of dTMP, an essential precursor for DNA biosynthesis. The sequence is that of Thymidylate synthase from Bradyrhizobium diazoefficiens (strain JCM 10833 / BCRC 13528 / IAM 13628 / NBRC 14792 / USDA 110).